We begin with the raw amino-acid sequence, 184 residues long: Phosducin-like protein 3 (184 aa).

The tract at residues 45 to 184 (HGELKEIDEQ…VKNNKFKEDD (140 aa)) is thioredoxin fold.

Belongs to the phosducin family.

The polypeptide is Phosducin-like protein 3 (phlp3) (Dictyostelium discoideum (Social amoeba)).